The sequence spans 342 residues: Glycerol-1-phosphate dehydrogenase [NAD(P)+] (342 aa).

NAD(+)-binding positions include 84-88 (GRPID) and 106-109 (TSAS). A substrate-binding site is contributed by aspartate 111. NAD(+) is bound at residue serine 115. Residue aspartate 160 coordinates substrate. Zn(2+) contacts are provided by aspartate 160 and histidine 241. Histidine 245 provides a ligand contact to substrate. Histidine 260 serves as a coordination point for Zn(2+).

Belongs to the glycerol-1-phosphate dehydrogenase family. Homodimer. The cofactor is Zn(2+).

Its subcellular location is the cytoplasm. The enzyme catalyses sn-glycerol 1-phosphate + NAD(+) = dihydroxyacetone phosphate + NADH + H(+). It catalyses the reaction sn-glycerol 1-phosphate + NADP(+) = dihydroxyacetone phosphate + NADPH + H(+). It participates in membrane lipid metabolism; glycerophospholipid metabolism. Functionally, catalyzes the NAD(P)H-dependent reduction of dihydroxyacetonephosphate (DHAP or glycerone phosphate) to glycerol 1-phosphate (G1P). The G1P thus generated is used as the glycerophosphate backbone of phospholipids in the cellular membranes of Archaea. In Pyrobaculum arsenaticum (strain DSM 13514 / JCM 11321 / PZ6), this protein is Glycerol-1-phosphate dehydrogenase [NAD(P)+].